The sequence spans 392 residues: MTQHLTAETLRKDFLAVFGQEVDQTFFSPGRINLIGEHTDYNGGHVFPVAISLGTYGAARKRDDQVLRFYSANFEDKGIIEVPLADLKFEKEHNWTNYPKGVLHFLQEAGHVIDKGFDFYVYGNIPNGSGLSSSASLEILTGVVAEHLFDLKLERLDLVKIGKQTENNFIGVNSGIMDQFAIGMGADQRAIYLDTNTLEYDLVPLDLKDNVVVIMNTNKRRELADSKYNERRAECEKAVEELQVALDIQTLGELDEWAVDQYSYLIKDENRLKRARHAVLENQRTLKAQAALQAGDLETFGRLMNASHVSLEHDYEVTGLELDTLVHTAWAQEGVLGARMTGAGFSGCAIALVQKDTVEAFKEAVGKHYEEVVGYAPSFYIAEVAGGTRVLD.

E37–D40 is a binding site for substrate. ATP is bound by residues S71 and G128 to S134. Mg(2+) contacts are provided by S134 and E166. D178 functions as the Proton acceptor in the catalytic mechanism. Y228 provides a ligand contact to substrate.

The protein belongs to the GHMP kinase family. GalK subfamily.

It localises to the cytoplasm. It catalyses the reaction alpha-D-galactose + ATP = alpha-D-galactose 1-phosphate + ADP + H(+). The protein operates within carbohydrate metabolism; galactose metabolism. Functionally, catalyzes the transfer of the gamma-phosphate of ATP to D-galactose to form alpha-D-galactose-1-phosphate (Gal-1-P). This Streptococcus pneumoniae (strain ATCC BAA-255 / R6) protein is Galactokinase.